The chain runs to 358 residues: MSRQTQAIIHADALLHNFKALAAIAPSSQSMAVVKADAYGHGAVNVARILQHVSSQFAVAIIEEAIALRDAGISAPVVVLEGAHQAKECQMAFQHNCILVMHCEEQLQWLNNCPENQRPHIWLKVDSGMHRLGFAISDIEDMTKKYRHLLSEQTVIATHFACADDVDNGFTASQLSAFKRVADAIGLPTSVANSPATVNWPASRNAWNRLGVGVYGGAVSTANNVGVEIYPAMTLRSSILAVRTIAAGEGVGYGQRWVASKPSKIATVGIGYADGYPRHCKNKTPVMVRGKRAFLAGRVSMDMITIDVTHIDNVSVGDEVELWGQNVPIQEVAACADTIDYELMTRVSQRVPRIVKYL.

Lysine 35 functions as the Proton acceptor; specific for D-alanine in the catalytic mechanism. Position 35 is an N6-(pyridoxal phosphate)lysine (lysine 35). Residue arginine 131 participates in substrate binding. The active-site Proton acceptor; specific for L-alanine is tyrosine 253. Substrate is bound at residue methionine 301.

Belongs to the alanine racemase family. The cofactor is pyridoxal 5'-phosphate.

The enzyme catalyses L-alanine = D-alanine. Its pathway is amino-acid biosynthesis; D-alanine biosynthesis; D-alanine from L-alanine: step 1/1. Its function is as follows. Catalyzes the interconversion of L-alanine and D-alanine. May also act on other amino acids. The protein is Alanine racemase (alr) of Alteromonas mediterranea (strain DSM 17117 / CIP 110805 / LMG 28347 / Deep ecotype).